We begin with the raw amino-acid sequence, 222 residues long: Peptide methionine sulfoxide reductase MsrA 2 (222 aa).

Cysteine 56 is a catalytic residue.

Belongs to the MsrA Met sulfoxide reductase family.

The enzyme catalyses L-methionyl-[protein] + [thioredoxin]-disulfide + H2O = L-methionyl-(S)-S-oxide-[protein] + [thioredoxin]-dithiol. The catalysed reaction is [thioredoxin]-disulfide + L-methionine + H2O = L-methionine (S)-S-oxide + [thioredoxin]-dithiol. Has an important function as a repair enzyme for proteins that have been inactivated by oxidation. Catalyzes the reversible oxidation-reduction of methionine sulfoxide in proteins to methionine. This is Peptide methionine sulfoxide reductase MsrA 2 (msrA2) from Nostoc sp. (strain PCC 7120 / SAG 25.82 / UTEX 2576).